We begin with the raw amino-acid sequence, 24 residues long: Humanin-like 13 (24 aa).

The protein belongs to the humanin family.

It localises to the secreted. The protein resides in the cytoplasm. Plays a role as a neuroprotective and antiapoptotic factor. This Homo sapiens (Human) protein is Humanin-like 13.